The chain runs to 344 residues: Biotin synthase (344 aa).

The 228-residue stretch at Ala40–Arg267 folds into the Radical SAM core domain. Cys55, Cys59, and Cys62 together coordinate [4Fe-4S] cluster. Cys99, Cys130, Cys190, and Arg262 together coordinate [2Fe-2S] cluster.

Belongs to the radical SAM superfamily. Biotin synthase family. In terms of assembly, homodimer. [4Fe-4S] cluster is required as a cofactor. Requires [2Fe-2S] cluster as cofactor.

The catalysed reaction is (4R,5S)-dethiobiotin + (sulfur carrier)-SH + 2 reduced [2Fe-2S]-[ferredoxin] + 2 S-adenosyl-L-methionine = (sulfur carrier)-H + biotin + 2 5'-deoxyadenosine + 2 L-methionine + 2 oxidized [2Fe-2S]-[ferredoxin]. It functions in the pathway cofactor biosynthesis; biotin biosynthesis; biotin from 7,8-diaminononanoate: step 2/2. Functionally, catalyzes the conversion of dethiobiotin (DTB) to biotin by the insertion of a sulfur atom into dethiobiotin via a radical-based mechanism. This Xanthomonas oryzae pv. oryzae (strain PXO99A) protein is Biotin synthase.